The sequence spans 708 residues: Probable GTP diphosphokinase RSH3, chloroplastic (708 aa).

2 disordered regions span residues 1 to 50 (MSLP…AAGG) and 109 to 134 (HSPVSVFQGPSSSPAASRSPPASWLA). The N-terminal 58 residues, 1-58 (MSLPAISLYTSPPPGAVYSSEFDPSSRGSSPPCSTAPPSTSHRPPAAAGGLSCLFSSP), are a transit peptide targeting the chloroplast. Composition is skewed to low complexity over residues 29 to 41 (SSPPCSTAPPSTS) and 118 to 131 (PSSSPAASRSPPAS). The region spanning 233–337 (YLQHCVETAV…IKLADRVHNM (105 aa)) is the HD domain.

Belongs to the RelA/SpoT family.

Its subcellular location is the plastid. The protein resides in the chloroplast. It carries out the reaction GTP + ATP = guanosine 3'-diphosphate 5'-triphosphate + AMP. In terms of biological role, probable ppGpp (guanosine 3'-diphosphate 5'-diphosphate) synthetase that may be involved in a rapid plant ppGpp-mediated response to pathogens and other stresses. In Oryza sativa subsp. japonica (Rice), this protein is Probable GTP diphosphokinase RSH3, chloroplastic (RSH3).